The sequence spans 101 residues: Apolipoprotein C-II (101 aa).

Residues 1–22 form the signal peptide; it reads MGARHLLALLLVLLVLGFEVQG. The segment at 66 to 74 is lipid binding; it reads TMDEKIRDM. A lipoprotein lipase cofactor region spans residues 78–101; that stretch reads STAAVSTYVGIFTDQLLSLLKGED.

The protein belongs to the apolipoprotein C2 family. In terms of processing, proapolipoprotein C-II is synthesized as a sialic acid containing glycoprotein which is subsequently desialylated prior to its proteolytic processing. Post-translationally, proapolipoprotein C-II, the major form found in plasma undergoes proteolytic cleavage of its N-terminal hexapeptide to generate apolipoprotein C-II, which occurs as the minor form in plasma.

The protein localises to the secreted. Its function is as follows. Component of chylomicrons, very low-density lipoproteins (VLDL), low-density lipoproteins (LDL), and high-density lipoproteins (HDL) in plasma. Plays an important role in lipoprotein metabolism as an activator of lipoprotein lipase. Both proapolipoprotein C-II and apolipoprotein C-II can activate lipoprotein lipase. The chain is Apolipoprotein C-II (APOC2) from Tapirus terrestris (Lowland tapir).